Here is a 202-residue protein sequence, read N- to C-terminus: MIIGYARVSSLDQNLERQLENLKTFGAEKIFTEKQSGKSIENRPILQKALNFVRMGDRFIVESIDRLGRNYNEVIHTVNYLKDKEVQLMITSLPMMNEVIGNPLLDKFMKDLIIQILAMVSEQERNESKRRQAQGIQVAKEKGVYKGRPLLYSPNAKDPQKRVIYHRVVEMLEEGQAISKIAKEVNITRQTVYRIKHDNGLS.

The 143-residue stretch at 1-143 folds into the Resolvase/invertase-type recombinase catalytic domain; it reads MIIGYARVSS…QGIQVAKEKG (143 aa). The active-site O-(5'-phospho-DNA)-serine intermediate is serine 9.

It belongs to the site-specific recombinase resolvase family.

Its function is as follows. Potential DNA invertase. This is Putative transposon Tn552 DNA-invertase bin3 (bin3) from Staphylococcus aureus.